A 214-amino-acid polypeptide reads, in one-letter code: uncharacterized protein (214 aa).

The N-terminal 49 residues, methionine 1–alanine 49, are a transit peptide targeting the chloroplast.

It is found in the plastid. Its subcellular location is the chloroplast. This is an uncharacterized protein from Arabidopsis thaliana (Mouse-ear cress).